The chain runs to 76 residues: Conotoxin Cal5a L3 (76 aa).

An N-terminal signal peptide occupies residues 1–22 (MRFYIGLMAALMLTSVLRTDSA). A propeptide spanning residues 23–42 (SVGQTGTKSELAVIERVIRQ) is cleaved from the precursor. Proline 50 carries the 4-hydroxyproline modification. A 4-hydroxyproline; partial mark is found at proline 58, proline 62, and proline 64.

Belongs to the conotoxin T superfamily. Post-translationally, contains 2 disulfide bonds that can be either 'C1-C3, C2-C4' or 'C1-C4, C2-C3', since these disulfide connectivities have been observed for conotoxins with cysteine framework V (for examples, see AC P0DQQ7 and AC P81755). Expressed by the venom duct.

Its subcellular location is the secreted. In terms of biological role, probable neurotoxin with unknown target. Possibly targets ion channels. The chain is Conotoxin Cal5a L3 from Californiconus californicus (California cone).